Consider the following 339-residue polypeptide: MRVYYDRDADLNLIKGKNVVIVGYGSQGHAHALNLRDSGVKDIVIALREGSATAKKAEHEGFKVMNVADAAKWGDVVMMLTPDELQGDIYKESLEPNMKQGAALLFAHGLNVHFNLIEPRKDLDVLMVAPKGPGHTVRGEYLKGGGVPTLIAIAQDASGNAHDLGLSYASANGGGRAGIIETTFKEECETDLFGEQAVLCGGLVELIKAGFETLVEAGYAPEMAYFECLHEVKLIVDLIYEGGIANMNYSISNTAEYGEYVTGPRIVTPETKAEMKRVLNDIQSGIFTRNWMLENKVGQTSFKATRAKLAAHPIEEVGAKLRGMMPWISEKALVDKTKN.

Positions 1 to 182 constitute a KARI N-terminal Rossmann domain; sequence MRVYYDRDAD…GGGRAGIIET (182 aa). Residues 24 to 27, R48, S51, T53, and 83 to 86 contribute to the NADP(+) site; these read YGSQ and DELQ. H108 is a catalytic residue. G134 provides a ligand contact to NADP(+). The region spanning 183 to 328 is the KARI C-terminal knotted domain; it reads TFKEECETDL…AKLRGMMPWI (146 aa). Mg(2+) contacts are provided by D191, E195, E227, and E231. A substrate-binding site is contributed by S252.

The protein belongs to the ketol-acid reductoisomerase family. Mg(2+) is required as a cofactor.

It carries out the reaction (2R)-2,3-dihydroxy-3-methylbutanoate + NADP(+) = (2S)-2-acetolactate + NADPH + H(+). The catalysed reaction is (2R,3R)-2,3-dihydroxy-3-methylpentanoate + NADP(+) = (S)-2-ethyl-2-hydroxy-3-oxobutanoate + NADPH + H(+). It participates in amino-acid biosynthesis; L-isoleucine biosynthesis; L-isoleucine from 2-oxobutanoate: step 2/4. Its pathway is amino-acid biosynthesis; L-valine biosynthesis; L-valine from pyruvate: step 2/4. In terms of biological role, involved in the biosynthesis of branched-chain amino acids (BCAA). Catalyzes an alkyl-migration followed by a ketol-acid reduction of (S)-2-acetolactate (S2AL) to yield (R)-2,3-dihydroxy-isovalerate. In the isomerase reaction, S2AL is rearranged via a Mg-dependent methyl migration to produce 3-hydroxy-3-methyl-2-ketobutyrate (HMKB). In the reductase reaction, this 2-ketoacid undergoes a metal-dependent reduction by NADPH to yield (R)-2,3-dihydroxy-isovalerate. This Methylorubrum extorquens (strain CM4 / NCIMB 13688) (Methylobacterium extorquens) protein is Ketol-acid reductoisomerase (NADP(+)).